A 331-amino-acid polypeptide reads, in one-letter code: Nucleotide sugar transporter SLC35B4 (331 aa).

11 consecutive transmembrane segments (helical) span residues 4-24 (ALAV…LELL), 30-50 (GCGN…GFLF), 59-79 (PAIP…VSVV), 92-112 (LHMI…IIIL), 117-137 (SIFK…CTFM), 153-173 (GFQA…ALLM), 201-221 (ALPL…AVLF), 229-249 (IPVI…NIIT), 251-267 (YVCI…CASL), 268-288 (TVTL…ILYF), and 291-311 (PFTL…LMYT). The short motif at 326–331 (KDSKKN) is the Mediates endoplasmic reticulum retention element.

Belongs to the nucleotide-sugar transporter family. SLC35B subfamily.

It localises to the endoplasmic reticulum membrane. The catalysed reaction is UDP-N-acetyl-alpha-D-glucosamine(in) + UDP-alpha-D-glucuronate(out) = UDP-N-acetyl-alpha-D-glucosamine(out) + UDP-alpha-D-glucuronate(in). It catalyses the reaction UDP-alpha-D-xylose(in) + UDP-alpha-D-glucuronate(out) = UDP-alpha-D-xylose(out) + UDP-alpha-D-glucuronate(in). In terms of biological role, antiporter that transports nucleotide sugars across the endoplasmic reticulum (ER) membrane in exchange for another nucleotide sugar. May couple UDP-alpha-D-glucuronate (UDP-GlcA) or UDP-alpha-D-xylose (UDP-Xyl) efflux to UDP-alpha-D-glucuronate (UDP-GlcA) influx into the ER lumen, which in turn stimulates glucuronidation and excretion of endobiotics and xenobiotics. This is Nucleotide sugar transporter SLC35B4 (SLC35B4) from Pongo abelii (Sumatran orangutan).